Here is a 462-residue protein sequence, read N- to C-terminus: tRNA modification GTPase MnmE (462 aa).

Arg27, Glu89, and Arg128 together coordinate (6S)-5-formyl-5,6,7,8-tetrahydrofolate. Positions 223–383 constitute a TrmE-type G domain; the sequence is GLKIAIVGRP…LEAAILAAVG (161 aa). Asn233 lines the K(+) pocket. Residues 233-238, 252-258, and 277-280 each bind GTP; these read NVGKSS, TDLPGTT, and DTAG. Ser237 provides a ligand contact to Mg(2+). Thr252, Leu254, and Thr257 together coordinate K(+). Thr258 lines the Mg(2+) pocket. Lys462 lines the (6S)-5-formyl-5,6,7,8-tetrahydrofolate pocket.

Belongs to the TRAFAC class TrmE-Era-EngA-EngB-Septin-like GTPase superfamily. TrmE GTPase family. As to quaternary structure, homodimer. Heterotetramer of two MnmE and two MnmG subunits. It depends on K(+) as a cofactor.

Its subcellular location is the cytoplasm. Exhibits a very high intrinsic GTPase hydrolysis rate. Involved in the addition of a carboxymethylaminomethyl (cmnm) group at the wobble position (U34) of certain tRNAs, forming tRNA-cmnm(5)s(2)U34. This Synechococcus elongatus (strain ATCC 33912 / PCC 7942 / FACHB-805) (Anacystis nidulans R2) protein is tRNA modification GTPase MnmE.